We begin with the raw amino-acid sequence, 879 residues long: Phosphoenolpyruvate carboxylase (879 aa).

Residues His-138 and Lys-545 contribute to the active site.

It belongs to the PEPCase type 1 family. Mg(2+) serves as cofactor.

It carries out the reaction oxaloacetate + phosphate = phosphoenolpyruvate + hydrogencarbonate. Functionally, forms oxaloacetate, a four-carbon dicarboxylic acid source for the tricarboxylic acid cycle. This Haemophilus influenzae (strain 86-028NP) protein is Phosphoenolpyruvate carboxylase.